The following is a 76-amino-acid chain: Adropin (76 aa).

A signal peptide spans 1–33 (MGAAISQGALIAIVCNGLVGFLLLLLWVILCWA). The disordered stretch occupies residues 41 to 76 (VDSLSESSPNSSPGPCPEKAPPPQKPSHEGSYLLQP). A compositionally biased stretch (pro residues) spans 52–65 (SPGPCPEKAPPPQK).

In terms of tissue distribution, expressed in liver and brain.

It localises to the secreted. Functionally, involved in the regulation of glucose homeostasis and lipid metabolism. This is Adropin (ENHO) from Homo sapiens (Human).